The primary structure comprises 552 residues: Chaperonin GroEL (552 aa).

ATP-binding positions include 30-33, K51, 87-91, G415, 479-481, and D495; these read TLGP, DGTTT, and NAA.

The protein belongs to the chaperonin (HSP60) family. In terms of assembly, forms a cylinder of 14 subunits composed of two heptameric rings stacked back-to-back. Interacts with the co-chaperonin GroES.

The protein localises to the cytoplasm. It catalyses the reaction ATP + H2O + a folded polypeptide = ADP + phosphate + an unfolded polypeptide.. In terms of biological role, together with its co-chaperonin GroES, plays an essential role in assisting protein folding. The GroEL-GroES system forms a nano-cage that allows encapsulation of the non-native substrate proteins and provides a physical environment optimized to promote and accelerate protein folding. This Stutzerimonas stutzeri (Pseudomonas stutzeri) protein is Chaperonin GroEL.